The chain runs to 214 residues: Ceramide-1-phosphate transfer protein (214 aa).

An N-acylsphingoid base 1-phosphate-binding residues include D56, K60, R106, R110, and H150.

The protein belongs to the GLTP family. In terms of tissue distribution, ubiquitous. Detected in heart, brain, placenta, lung, liver, skeletal muscle, kidney, pancreas, spleen, thymus, prostate, testis, ovary, small intestine, colon and peripheral blood leukocytes.

Its subcellular location is the cytoplasm. It is found in the cytosol. The protein localises to the golgi apparatus. It localises to the trans-Golgi network membrane. The protein resides in the cell membrane. Its subcellular location is the endosome membrane. It is found in the nucleus outer membrane. The enzyme catalyses N-(hexadecanoyl)-sphing-4-enine-1-phosphate(in) = N-(hexadecanoyl)-sphing-4-enine-1-phosphate(out). It carries out the reaction N-(9Z-octadecenoyl)-sphing-4-enine-1-phosphate(in) = N-(9Z-octadecenoyl)-sphing-4-enine-1-phosphate(out). Functionally, mediates the intracellular transfer of ceramide-1-phosphate (C1P) between organelle membranes and the cell membrane. Required for normal structure of the Golgi stacks. Can bind phosphoceramides with a variety of aliphatic chains, but has a preference for lipids with saturated C16:0 or monounsaturated C18:1 aliphatic chains, and is inefficient with phosphoceramides containing lignoceryl (C24:0). Plays a role in the regulation of the cellular levels of ceramide-1-phosphate, and thereby contributes to the regulation of phospholipase PLA2G4A activity and the release of arachidonic acid. Has no activity with galactosylceramide, lactosylceramide, sphingomyelin, phosphatidylcholine, phosphatidic acid and ceramide. C1P transfer is stimulated by phosphatidylserine in C1P source vesicles. Regulates autophagy, inflammasome mediated IL1B and IL18 processing, and pyroptosis, but not apoptosis. This is Ceramide-1-phosphate transfer protein from Homo sapiens (Human).